The chain runs to 203 residues: Cold-regulated 413 plasma membrane protein 2 (203 aa).

Residues 1–43 (MGRMDYLAMKTDDVDTVALVNSDMEELKVAAKKLFSDVSKLGG) lie on the Extracellular side of the membrane. The chain crosses the membrane as a helical span at residues 44–64 (LGFGVSFLKFLASFAAIYLLI). Topologically, residues 65 to 74 (LDRTNWKTKM) are cytoplasmic. Residues 75–95 (LTSLLIPYIFLSLPSVIFNFL) form a helical membrane-spanning segment. The Extracellular segment spans residues 96–98 (SGD). The chain crosses the membrane as a helical span at residues 99–119 (VGKWIAFVAVVLRLFFPKHFP). Asp-120 is a topological domain (cytoplasmic). A helical membrane pass occupies residues 121–141 (WLEMPGSLILLLVVSPHFLAH). Residues 142-144 (HIR) lie on the Extracellular side of the membrane. Residues 145–165 (GTWIGTVISLFIGCYLLQEHI) form a helical membrane-spanning segment. The Cytoplasmic portion of the chain corresponds to 166 to 179 (RASGGFRNSFTQPR). A helical membrane pass occupies residues 180-200 (GVSNTLGIILLLVYPVWALIV). Residues 201–203 (RVM) lie on the Extracellular side of the membrane.

Belongs to the Cold-regulated 413 protein family.

The protein resides in the cell membrane. In Arabidopsis thaliana (Mouse-ear cress), this protein is Cold-regulated 413 plasma membrane protein 2 (COR413PM2).